We begin with the raw amino-acid sequence, 151 residues long: Macrodomain Ter protein (151 aa).

The protein belongs to the MatP family. Homodimer.

It is found in the cytoplasm. Its function is as follows. Required for spatial organization of the terminus region of the chromosome (Ter macrodomain) during the cell cycle. Prevents early segregation of duplicated Ter macrodomains during cell division. Binds specifically to matS, which is a 13 bp signature motif repeated within the Ter macrodomain. This Yersinia enterocolitica serotype O:8 / biotype 1B (strain NCTC 13174 / 8081) protein is Macrodomain Ter protein.